The sequence spans 390 residues: MNDNKILVVNAGSSSIKFQLFDYHKKVLAKALCERIFVDGFFKLEFNEQKVEEKVAFPDHHAAVTHFLNTLKKHKIIQELSDIILVGHRVVQGANYFKDSVIVDAEALAKIKEFIKLAPLHNKPEADVIEIFFKEVPSAKNVAVFDTTFHTTIPQENYLYAVPRSWEQKHLVRRYGFHGTSYKFINNYLEKHLNKQNLNLIVCHLGNGASVCAIKNGKSFNTSMGFTPLEGLIMGTRSGDLDPAIIGYVAEQENMSASDVVNALNKKSGMLALTGASDMRDVFAKPQENAVAIKMYVNRVADYIAKYLNQLEGNIDGLVFTGGIGENASDCVELFINAVKSLGFATDLKLFVKYGDSCVVSTPQSKYKIYRVRTNEELMIVEDSIRLTQK.

Residue N10 coordinates Mg(2+). Residue K17 coordinates ATP. Substrate is bound at residue R89. Residue D146 is the Proton donor/acceptor of the active site. Residues 204–208, 278–280, and 323–327 each bind ATP; these read HLGNG, DMR, and GIGEN. A Mg(2+)-binding site is contributed by E376.

The protein belongs to the acetokinase family. In terms of assembly, homodimer. Requires Mg(2+) as cofactor. Mn(2+) serves as cofactor.

The protein resides in the cytoplasm. The enzyme catalyses acetate + ATP = acetyl phosphate + ADP. It functions in the pathway metabolic intermediate biosynthesis; acetyl-CoA biosynthesis; acetyl-CoA from acetate: step 1/2. Catalyzes the formation of acetyl phosphate from acetate and ATP. Can also catalyze the reverse reaction. In Mycoplasma pneumoniae (strain ATCC 29342 / M129 / Subtype 1) (Mycoplasmoides pneumoniae), this protein is Acetate kinase.